Reading from the N-terminus, the 50-residue chain is Photosystem II reaction center protein M (50 aa).

A helical transmembrane segment spans residues 7-27; it reads GFVASLLFVGVPTIFLIGLFI.

It belongs to the PsbM family. PSII is composed of 1 copy each of membrane proteins PsbA, PsbB, PsbC, PsbD, PsbE, PsbF, PsbH, PsbI, PsbJ, PsbK, PsbL, PsbM, PsbT, PsbX, PsbY, Psb30/Ycf12, peripheral proteins PsbO, CyanoQ (PsbQ), PsbU, PsbV and a large number of cofactors. It forms dimeric complexes.

The protein localises to the cellular thylakoid membrane. One of the components of the core complex of photosystem II (PSII). PSII is a light-driven water:plastoquinone oxidoreductase that uses light energy to abstract electrons from H(2)O, generating O(2) and a proton gradient subsequently used for ATP formation. It consists of a core antenna complex that captures photons, and an electron transfer chain that converts photonic excitation into a charge separation. This subunit is found at the monomer-monomer interface. This chain is Photosystem II reaction center protein M, found in Prochlorococcus marinus (strain MIT 9301).